The following is a 291-amino-acid chain: 3-hydroxy-5-phosphonooxypentane-2,4-dione thiolase (291 aa).

K203 acts as the Schiff-base intermediate with substrate in catalysis.

It belongs to the DeoC/FbaB aldolase family. In terms of assembly, homodecamer.

The protein resides in the cytoplasm. It catalyses the reaction dihydroxyacetone phosphate + acetyl-CoA = 3-hydroxy-2,4-dioxopentyl phosphate + CoA. Functionally, involved in the degradation of phospho-AI-2, thereby terminating induction of the lsr operon and closing the AI-2 signaling cycle. Catalyzes the transfer of an acetyl moiety from 3-hydroxy-5-phosphonooxypentane-2,4-dione to CoA to form glycerone phosphate and acetyl-CoA. The polypeptide is 3-hydroxy-5-phosphonooxypentane-2,4-dione thiolase (Photorhabdus laumondii subsp. laumondii (strain DSM 15139 / CIP 105565 / TT01) (Photorhabdus luminescens subsp. laumondii)).